Reading from the N-terminus, the 545-residue chain is Glucose-6-phosphate isomerase (545 aa).

Glu-351 (proton donor) is an active-site residue. Catalysis depends on residues His-382 and Lys-510.

The protein belongs to the GPI family.

The protein localises to the cytoplasm. It catalyses the reaction alpha-D-glucose 6-phosphate = beta-D-fructose 6-phosphate. The protein operates within carbohydrate biosynthesis; gluconeogenesis. Its pathway is carbohydrate degradation; glycolysis; D-glyceraldehyde 3-phosphate and glycerone phosphate from D-glucose: step 2/4. Functionally, catalyzes the reversible isomerization of glucose-6-phosphate to fructose-6-phosphate. The chain is Glucose-6-phosphate isomerase from Shewanella frigidimarina (strain NCIMB 400).